Here is a 615-residue protein sequence, read N- to C-terminus: Proteasome-associated ATPase (615 aa).

The segment covering 1-13 (MSESQRHEAREDG) has biased composition (basic and acidic residues). The tract at residues 1 to 32 (MSESQRHEAREDGFTTPHESGLSSEDAAELEE) is disordered. A coiled-coil region spans residues 22 to 100 (LSSEDAAELE…LREEVDRLGQ (79 aa)). 302–307 (GCGKTL) serves as a coordination point for ATP. A docks into pockets in the proteasome alpha-ring region spans residues 614 to 615 (YL).

It belongs to the AAA ATPase family. In terms of assembly, homohexamer. Assembles into a hexameric ring structure that caps the 20S proteasome core. Strongly interacts with the prokaryotic ubiquitin-like protein Pup through a hydrophobic interface; the interacting region of ARC lies in its N-terminal coiled-coil domain. There is one Pup binding site per ARC hexamer ring. Upon ATP-binding, the C-terminus of ARC interacts with the alpha-rings of the proteasome core, possibly by binding to the intersubunit pockets.

It participates in protein degradation; proteasomal Pup-dependent pathway. In terms of biological role, ATPase which is responsible for recognizing, binding, unfolding and translocation of pupylated proteins into the bacterial 20S proteasome core particle. May be essential for opening the gate of the 20S proteasome via an interaction with its C-terminus, thereby allowing substrate entry and access to the site of proteolysis. Thus, the C-termini of the proteasomal ATPase may function like a 'key in a lock' to induce gate opening and therefore regulate proteolysis. The protein is Proteasome-associated ATPase of Mycobacterium sp. (strain JLS).